Reading from the N-terminus, the 184-residue chain is dCTP deaminase (184 aa).

DCTP is bound by residues 107 to 112 (KSTYAR), 131 to 133 (TLE), glutamine 152, tyrosine 166, and glutamine 176. Glutamate 133 (proton donor/acceptor) is an active-site residue.

Belongs to the dCTP deaminase family. As to quaternary structure, homotrimer.

It carries out the reaction dCTP + H2O + H(+) = dUTP + NH4(+). It functions in the pathway pyrimidine metabolism; dUMP biosynthesis; dUMP from dCTP (dUTP route): step 1/2. Catalyzes the deamination of dCTP to dUTP. The protein is dCTP deaminase of Erythrobacter litoralis (strain HTCC2594).